The chain runs to 361 residues: S-adenosylmethionine:tRNA ribosyltransferase-isomerase (361 aa).

This sequence belongs to the QueA family. As to quaternary structure, monomer.

The protein resides in the cytoplasm. The catalysed reaction is 7-aminomethyl-7-carbaguanosine(34) in tRNA + S-adenosyl-L-methionine = epoxyqueuosine(34) in tRNA + adenine + L-methionine + 2 H(+). Its pathway is tRNA modification; tRNA-queuosine biosynthesis. Its function is as follows. Transfers and isomerizes the ribose moiety from AdoMet to the 7-aminomethyl group of 7-deazaguanine (preQ1-tRNA) to give epoxyqueuosine (oQ-tRNA). The chain is S-adenosylmethionine:tRNA ribosyltransferase-isomerase from Afipia carboxidovorans (strain ATCC 49405 / DSM 1227 / KCTC 32145 / OM5) (Oligotropha carboxidovorans).